We begin with the raw amino-acid sequence, 111 residues long: Cytochrome c (111 aa).

Position 1 is an N-acetylalanine (Ala1). The heme c site is built by Cys22, Cys25, and His26. Lys80 is subject to N6,N6,N6-trimethyllysine. Met88 is a binding site for heme c. Residue Lys94 is modified to N6,N6,N6-trimethyllysine.

It belongs to the cytochrome c family. Post-translationally, binds 1 heme c group covalently per subunit.

It is found in the mitochondrion intermembrane space. Functionally, electron carrier protein. The oxidized form of the cytochrome c heme group can accept an electron from the heme group of the cytochrome c1 subunit of cytochrome reductase. Cytochrome c then transfers this electron to the cytochrome oxidase complex, the final protein carrier in the mitochondrial electron-transport chain. This Sesamum indicum (Oriental sesame) protein is Cytochrome c.